We begin with the raw amino-acid sequence, 485 residues long: ATP synthase subunit beta (485 aa).

Positions M1 to T11 are enriched in basic and acidic residues. A disordered region spans residues M1–G20. G170–T177 serves as a coordination point for ATP.

This sequence belongs to the ATPase alpha/beta chains family. F-type ATPases have 2 components, CF(1) - the catalytic core - and CF(0) - the membrane proton channel. CF(1) has five subunits: alpha(3), beta(3), gamma(1), delta(1), epsilon(1). CF(0) has three main subunits: a(1), b(2) and c(9-12). The alpha and beta chains form an alternating ring which encloses part of the gamma chain. CF(1) is attached to CF(0) by a central stalk formed by the gamma and epsilon chains, while a peripheral stalk is formed by the delta and b chains.

The protein resides in the cell membrane. The enzyme catalyses ATP + H2O + 4 H(+)(in) = ADP + phosphate + 5 H(+)(out). In terms of biological role, produces ATP from ADP in the presence of a proton gradient across the membrane. The catalytic sites are hosted primarily by the beta subunits. The chain is ATP synthase subunit beta from Mycolicibacterium paratuberculosis (strain ATCC BAA-968 / K-10) (Mycobacterium paratuberculosis).